A 216-amino-acid polypeptide reads, in one-letter code: Probable disulfide bond formation protein D (216 aa).

Positions 1–25 (MKSNKLMALGIVFSIAVLIVIGTIA) are cleaved as a signal peptide. Cysteines 65 and 68 form a disulfide.

This sequence belongs to the thioredoxin family. DsbA subfamily.

Its function is as follows. May be required for disulfide bond formation in some proteins. The protein is Probable disulfide bond formation protein D (bdbD) of Bacillus cereus (strain ATCC 14579 / DSM 31 / CCUG 7414 / JCM 2152 / NBRC 15305 / NCIMB 9373 / NCTC 2599 / NRRL B-3711).